Consider the following 307-residue polypeptide: Shikimate kinase 2, chloroplastic (307 aa).

A chloroplast-targeting transit peptide spans 1-60 (MEARAGLAMQSRAAVGVGAGPGVGRRGRAVIRVGKRPTAASLRVGGPAGPAAAKPLAPLY). 101–108 (GMMGSGKS) contacts ATP. A Mg(2+)-binding site is contributed by serine 108. Residues aspartate 126, arginine 151, and glycine 173 each contribute to the substrate site. Residue arginine 212 participates in ATP binding. The interval 285-307 (HSTSSGPVGDLIVDSQNRRTKAL) is disordered.

It belongs to the shikimate kinase family. It depends on Mg(2+) as a cofactor. Expressed in panicles.

Its subcellular location is the plastid. It localises to the chloroplast. It catalyses the reaction shikimate + ATP = 3-phosphoshikimate + ADP + H(+). It participates in metabolic intermediate biosynthesis; chorismate biosynthesis; chorismate from D-erythrose 4-phosphate and phosphoenolpyruvate: step 5/7. Catalyzes the specific phosphorylation of the 3-hydroxyl group of shikimic acid using ATP as a cosubstrate. The sequence is that of Shikimate kinase 2, chloroplastic (SK2) from Oryza sativa subsp. japonica (Rice).